We begin with the raw amino-acid sequence, 267 residues long: MKRHFETTRRIVIKVGTSSLVQTSGKINLSKIDHLAFVISSLMNRGMEVILVSSGAMGFGLDILKMDKRPQEISQQQAVSSVGQVAMMSLYSQIFSHYQTHVSQILLTRDVVVFPESLQNVTNSFESLLSMGILPIVNENDAVSVDEMDHKTKFGDNDRLSAVVAKITKADLLIMLSDIDGLFDKNPNIYDDAVLRSHVSEITDDIIKSAGGAGSKFGTGGMLSKIKSAQMVFDNNGQMILMNGANPRDILKVLDGHNIGTYFAQGK.

ATP is bound at residue Lys14. Substrate contacts are provided by Ser54, Asp141, and Asn157. ATP is bound by residues Ser177–Asp178 and Thr219–Lys225.

Belongs to the glutamate 5-kinase family.

Its subcellular location is the cytoplasm. It catalyses the reaction L-glutamate + ATP = L-glutamyl 5-phosphate + ADP. The protein operates within amino-acid biosynthesis; L-proline biosynthesis; L-glutamate 5-semialdehyde from L-glutamate: step 1/2. Its function is as follows. Catalyzes the transfer of a phosphate group to glutamate to form L-glutamate 5-phosphate. This is Glutamate 5-kinase from Streptococcus agalactiae serotype Ia (strain ATCC 27591 / A909 / CDC SS700).